A 342-amino-acid chain; its full sequence is GTPase Obg (342 aa).

One can recognise an Obg domain in the interval 1–159 (MQFIDQAQIE…KLLRLELKLL (159 aa)). Residues 160-330 (AEVGIIGLPN…MLQEVWGILD (171 aa)) enclose the OBG-type G domain. Residues 166–173 (GLPNAGKS), 191–195 (FTTLI), 213–216 (DIPG), 280–283 (NKID), and 311–313 (SAV) contribute to the GTP site. Positions 173 and 193 each coordinate Mg(2+).

Belongs to the TRAFAC class OBG-HflX-like GTPase superfamily. OBG GTPase family. In terms of assembly, monomer. The cofactor is Mg(2+).

The protein localises to the cytoplasm. Its function is as follows. An essential GTPase which binds GTP, GDP and possibly (p)ppGpp with moderate affinity, with high nucleotide exchange rates and a fairly low GTP hydrolysis rate. Plays a role in control of the cell cycle, stress response, ribosome biogenesis and in those bacteria that undergo differentiation, in morphogenesis control. This Nostoc sp. (strain PCC 7120 / SAG 25.82 / UTEX 2576) protein is GTPase Obg.